The sequence spans 119 residues: Large ribosomal subunit protein uL18 (119 aa).

This sequence belongs to the universal ribosomal protein uL18 family. Part of the 50S ribosomal subunit; part of the 5S rRNA/L5/L18/L25 subcomplex. Contacts the 5S and 23S rRNAs.

Functionally, this is one of the proteins that bind and probably mediate the attachment of the 5S RNA into the large ribosomal subunit, where it forms part of the central protuberance. The polypeptide is Large ribosomal subunit protein uL18 (Mesorhizobium japonicum (strain LMG 29417 / CECT 9101 / MAFF 303099) (Mesorhizobium loti (strain MAFF 303099))).